Reading from the N-terminus, the 231-residue chain is Large ribosomal subunit protein uL1 (231 aa).

The protein belongs to the universal ribosomal protein uL1 family. Part of the 50S ribosomal subunit.

In terms of biological role, binds directly to 23S rRNA. The L1 stalk is quite mobile in the ribosome, and is involved in E site tRNA release. Its function is as follows. Protein L1 is also a translational repressor protein, it controls the translation of the L11 operon by binding to its mRNA. The chain is Large ribosomal subunit protein uL1 from Desulforudis audaxviator (strain MP104C).